The sequence spans 212 residues: Deoxyribose-phosphate aldolase (212 aa).

Residue D89 is the Proton donor/acceptor of the active site. The Schiff-base intermediate with acetaldehyde role is filled by K151. K180 acts as the Proton donor/acceptor in catalysis.

The protein belongs to the DeoC/FbaB aldolase family. DeoC type 1 subfamily.

It is found in the cytoplasm. It catalyses the reaction 2-deoxy-D-ribose 5-phosphate = D-glyceraldehyde 3-phosphate + acetaldehyde. The protein operates within carbohydrate degradation; 2-deoxy-D-ribose 1-phosphate degradation; D-glyceraldehyde 3-phosphate and acetaldehyde from 2-deoxy-alpha-D-ribose 1-phosphate: step 2/2. Its function is as follows. Catalyzes a reversible aldol reaction between acetaldehyde and D-glyceraldehyde 3-phosphate to generate 2-deoxy-D-ribose 5-phosphate. The sequence is that of Deoxyribose-phosphate aldolase from Clostridium botulinum (strain Okra / Type B1).